The following is a 506-amino-acid chain: Ecdysteroid UDP-glucosyltransferase (506 aa).

Residues 1 to 18 (MTILCWLALLSTLTAVNA) form the signal peptide.

The protein belongs to the UDP-glycosyltransferase family. In terms of processing, glycosylated.

Catalyzes the transfer of glucose from UDP-glucose to ecdysteroids which are insect molting hormones. Acts on the host at the organismal level to block its development, thereby increasing the yield of progeny virus. The sequence is that of Ecdysteroid UDP-glucosyltransferase (EGT) from Lepidoptera (butterflies and moths).